Consider the following 395-residue polypeptide: Multidrug resistance protein MdtL (395 aa).

Over 1–3 (MKR) the chain is Cytoplasmic. A helical membrane pass occupies residues 4–24 (FLLCSFALVLLYPAGIDMYLV). Residues 25–41 (GLPRIAADLNASEAQLH) are Periplasmic-facing. A helical membrane pass occupies residues 42 to 62 (IAFSVYLAGMATAMLFAGKIA). The Cytoplasmic portion of the chain corresponds to 63 to 68 (DQSGRK). The chain crosses the membrane as a helical span at residues 69 to 89 (PVAIVGALVFMMASLLCSRAS). Over 90 to 92 (EGS) the chain is Periplasmic. The chain crosses the membrane as a helical span at residues 93–113 (LFLSGRFLQGVGAGGCYVVAF). Over 114 to 130 (AILRDTLDEHRRAKVLS) the chain is Cytoplasmic. Residues 131 to 151 (LLNGITCIVPVLAPVVGHLIM) form a helical membrane-spanning segment. Over 152-157 (LRFPWQ) the chain is Periplasmic. Residues 158-178 (SLFYTMSAMGIIVGLLSLFIL) form a helical membrane-spanning segment. The Cytoplasmic portion of the chain corresponds to 179–216 (RETRPVRLAPRDLSRSSPAAESLINRFFVSRLAITTLS). Residues 217 to 237 (VSVILTFVNASPVLLMEVMGF) form a helical membrane-spanning segment. The Periplasmic segment spans residues 238-246 (SRGDYAITM). The chain crosses the membrane as a helical span at residues 247–267 (ALTAGVSMVVSFSTPFALGLF). Topologically, residues 268–270 (KPR) are cytoplasmic. The chain crosses the membrane as a helical span at residues 271–291 (TLMLVSQGLFLTAGVTLSLAH). At 292–294 (TNT) the chain is on the periplasmic side. The helical transmembrane segment at 295–315 (VTLFGLTLICAGFSVGFGVAM) threads the bilayer. The Cytoplasmic segment spans residues 316 to 327 (SQALGPFSLRAG). The helical transmembrane segment at 328-350 (VASSTLGIAQVCGSSLWIWLAAI) threads the bilayer. Residues 351-354 (LGIS) are Periplasmic-facing. A helical membrane pass occupies residues 355–377 (AMNMLIGILIGCSIVSILLIFSV). Residues 378-395 (TPNRSVAEHEEIPYQSRP) are Cytoplasmic-facing.

It belongs to the major facilitator superfamily. DHA1 family. MdtL (TC 2.A.1.2.22) subfamily.

The protein resides in the cell inner membrane. This is Multidrug resistance protein MdtL (mdtL) from Salmonella typhimurium (strain LT2 / SGSC1412 / ATCC 700720).